The primary structure comprises 537 residues: CTP synthase (537 aa).

Positions 1–267 (MTKYIFVTGG…DQIVCDHLKL (267 aa)) are amidoligase domain. S13 is a binding site for CTP. Residue S13 coordinates UTP. Residue 14-19 (SIGKGI) participates in ATP binding. An L-glutamine-binding site is contributed by Y54. D71 contacts ATP. Positions 71 and 141 each coordinate Mg(2+). CTP contacts are provided by residues 148–150 (DIE), 188–193 (KTKPTQ), and K224. UTP-binding positions include 188-193 (KTKPTQ) and K224. An ATP-binding site is contributed by 240–242 (RDV). A Glutamine amidotransferase type-1 domain is found at 292-535 (RIALVGKYVE…VTAAVKNKNQ (244 aa)). G354 lines the L-glutamine pocket. C381 serves as the catalytic Nucleophile; for glutamine hydrolysis. L-glutamine-binding positions include 382-385 (LGMQ), E405, and R463. Residues H508 and E510 contribute to the active site.

Belongs to the CTP synthase family. Homotetramer.

The catalysed reaction is UTP + L-glutamine + ATP + H2O = CTP + L-glutamate + ADP + phosphate + 2 H(+). The enzyme catalyses L-glutamine + H2O = L-glutamate + NH4(+). It catalyses the reaction UTP + NH4(+) + ATP = CTP + ADP + phosphate + 2 H(+). It participates in pyrimidine metabolism; CTP biosynthesis via de novo pathway; CTP from UDP: step 2/2. Allosterically activated by GTP, when glutamine is the substrate; GTP has no effect on the reaction when ammonia is the substrate. The allosteric effector GTP functions by stabilizing the protein conformation that binds the tetrahedral intermediate(s) formed during glutamine hydrolysis. Inhibited by the product CTP, via allosteric rather than competitive inhibition. Its function is as follows. Catalyzes the ATP-dependent amination of UTP to CTP with either L-glutamine or ammonia as the source of nitrogen. Regulates intracellular CTP levels through interactions with the four ribonucleotide triphosphates. The chain is CTP synthase from Streptococcus equi subsp. equi (strain 4047).